Here is a 185-residue protein sequence, read N- to C-terminus: MVNDVLREAESRMKKATEALRNHLATIRTGRASPALVEHLHVEAYGATLPLNQLATITVPEPRLLVIQPFDANTVKAISKAIMNSELGITPTDDGRVIRLAIPQLTEARRKELTKLVRARVEESKIALRNIRREALEDLRDLEHEKMISEDEHRRAQEKLQELTDRFVRELDHIGATKEAEVMEI.

Belongs to the RRF family.

It localises to the cytoplasm. Functionally, responsible for the release of ribosomes from messenger RNA at the termination of protein biosynthesis. May increase the efficiency of translation by recycling ribosomes from one round of translation to another. The polypeptide is Ribosome-recycling factor (Roseiflexus sp. (strain RS-1)).